A 205-amino-acid polypeptide reads, in one-letter code: ATP-dependent Clp protease proteolytic subunit (205 aa).

Residue serine 98 is the Nucleophile of the active site. The active site involves histidine 123.

It belongs to the peptidase S14 family. In terms of assembly, fourteen ClpP subunits assemble into 2 heptameric rings which stack back to back to give a disk-like structure with a central cavity, resembling the structure of eukaryotic proteasomes.

It localises to the cytoplasm. The catalysed reaction is Hydrolysis of proteins to small peptides in the presence of ATP and magnesium. alpha-casein is the usual test substrate. In the absence of ATP, only oligopeptides shorter than five residues are hydrolyzed (such as succinyl-Leu-Tyr-|-NHMec, and Leu-Tyr-Leu-|-Tyr-Trp, in which cleavage of the -Tyr-|-Leu- and -Tyr-|-Trp bonds also occurs).. Its function is as follows. Cleaves peptides in various proteins in a process that requires ATP hydrolysis. Has a chymotrypsin-like activity. Plays a major role in the degradation of misfolded proteins. This Desulfosudis oleivorans (strain DSM 6200 / JCM 39069 / Hxd3) (Desulfococcus oleovorans) protein is ATP-dependent Clp protease proteolytic subunit.